The sequence spans 89 residues: Cell division protein ZapA (89 aa).

The protein belongs to the ZapA family. Type 2 subfamily. Homodimer. Interacts with FtsZ.

Its subcellular location is the cytoplasm. In terms of biological role, activator of cell division through the inhibition of FtsZ GTPase activity, therefore promoting FtsZ assembly into bundles of protofilaments necessary for the formation of the division Z ring. It is recruited early at mid-cell but it is not essential for cell division. This chain is Cell division protein ZapA, found in Bacillus mycoides (strain KBAB4) (Bacillus weihenstephanensis).